Reading from the N-terminus, the 268-residue chain is Phosphatidylglycerol--prolipoprotein diacylglyceryl transferase (268 aa).

The next 7 helical transmembrane spans lie at 27-47 (PALR…MWLL), 66-86 (LLFY…VLFY), 104-124 (GGMS…YIAW), 130-150 (FFAV…AGRI), 181-201 (PSQL…LYWF), 208-228 (VGAV…IVET), and 242-262 (FMTM…YLIL). R149 contributes to the a 1,2-diacyl-sn-glycero-3-phospho-(1'-sn-glycerol) binding site.

The protein belongs to the Lgt family.

The protein localises to the cell inner membrane. It catalyses the reaction L-cysteinyl-[prolipoprotein] + a 1,2-diacyl-sn-glycero-3-phospho-(1'-sn-glycerol) = an S-1,2-diacyl-sn-glyceryl-L-cysteinyl-[prolipoprotein] + sn-glycerol 1-phosphate + H(+). The protein operates within protein modification; lipoprotein biosynthesis (diacylglyceryl transfer). In terms of biological role, catalyzes the transfer of the diacylglyceryl group from phosphatidylglycerol to the sulfhydryl group of the N-terminal cysteine of a prolipoprotein, the first step in the formation of mature lipoproteins. This Shewanella sp. (strain MR-4) protein is Phosphatidylglycerol--prolipoprotein diacylglyceryl transferase.